The chain runs to 385 residues: MGIALCKPERDAAAKNRQIETQIRIENQANKRKIKMLLLGISDSGKSTIVKQMRVNYCNGFNETEVVNAIFLIRNNIIDAFKHISLLILDSHIIKSDTEKVLLKLFAFESQKIEMMQEVDELRLINSIRVLECISVFFEHYSYHPMIPDNIHYFFPHLERIAISEYMPTVEDLIHMRQTTLGVHEISFDYQTQTIRLIDVGGQKTERRKWIHFFEGVTAVMFVCSLSSFNQATEQEPNNAFAWETSLNKVQNKILVRSTGKAKQRPGMVNRLDESVDLFTSIRENNFLKSSNFMLFLNKIDLLGKKLETIQFVNHFPAYEQWITNDNSVQSVAEFIESMFREGLDADQKIYAHLTQATITTNIEYTFGLCCDVIFNKNIETLSLE.

A lipid anchor (N-myristoyl glycine) is attached at glycine 2. Cysteine 6 carries the S-palmitoyl cysteine lipid modification. The G-alpha domain maps to 32–385 (RKIKMLLLGI…NKNIETLSLE (354 aa)). The G1 motif stretch occupies residues 35-48 (KMLLLGISDSGKST). GTP contacts are provided by residues 40-47 (GISDSGKS), 174-180 (IHMRQTT), 199-203 (DVGGQ), 298-301 (NKID), and alanine 357. Residues serine 47 and threonine 180 each coordinate Mg(2+). The interval 172–180 (DLIHMRQTT) is G2 motif. A G3 motif region spans residues 195–204 (IRLIDVGGQK). The interval 294 to 301 (MLFLNKID) is G4 motif. Residues 355–360 (TQATIT) form a G5 motif region.

The protein belongs to the G-alpha family. As to quaternary structure, g proteins are composed of 3 units; alpha, beta and gamma. The alpha chain contains the guanine nucleotide binding site.

Functionally, guanine nucleotide-binding proteins (G proteins) are involved as modulators or transducers in various transmembrane signaling systems. The chain is Guanine nucleotide-binding protein alpha-5 subunit (gpa-5) from Caenorhabditis briggsae.